The chain runs to 1234 residues: DNA-directed RNA polymerase subunit beta (1234 aa).

Residues 1187 to 1234 form a disordered region; sequence GREDAPPEEVYEEEYEEEPEELPEDIDFEPDNFDIDSEDLFMDDDYDG. Acidic residues predominate over residues 1192 to 1234; that stretch reads PPEEVYEEEYEEEPEELPEDIDFEPDNFDIDSEDLFMDDDYDG.

It belongs to the RNA polymerase beta chain family. As to quaternary structure, the RNAP catalytic core consists of 2 alpha, 1 beta, 1 beta' and 1 omega subunit. When a sigma factor is associated with the core the holoenzyme is formed, which can initiate transcription.

The enzyme catalyses RNA(n) + a ribonucleoside 5'-triphosphate = RNA(n+1) + diphosphate. In terms of biological role, DNA-dependent RNA polymerase catalyzes the transcription of DNA into RNA using the four ribonucleoside triphosphates as substrates. In Caldanaerobacter subterraneus subsp. tengcongensis (strain DSM 15242 / JCM 11007 / NBRC 100824 / MB4) (Thermoanaerobacter tengcongensis), this protein is DNA-directed RNA polymerase subunit beta.